The following is a 253-amino-acid chain: N-acetylglucosaminyl-phosphatidylinositol de-N-acetylase (253 aa).

Residues 3–23 (VAAPLLCLAAAVLVWGVLWVW) form a helical membrane-spanning segment. Residues 24–253 (GSWERMTRPE…YMRINSLNFL (230 aa)) lie on the Cytoplasmic side of the membrane.

The protein belongs to the PIGL family.

It localises to the endoplasmic reticulum membrane. It catalyses the reaction a 6-(N-acetyl-alpha-D-glucosaminyl)-1-(1,2-diacyl-sn-glycero-3-phospho)-1D-myo-inositol + H2O = a 6-(alpha-D-glucosaminyl)-1-(1,2-diacyl-sn-glycero-3-phospho)-1D-myo-inositol + acetate. It participates in glycolipid biosynthesis; glycosylphosphatidylinositol-anchor biosynthesis. Catalyzes the second step of glycosylphosphatidylinositol (GPI) biosynthesis, which is the de-N-acetylation of N-acetylglucosaminyl-phosphatidylinositol. The chain is N-acetylglucosaminyl-phosphatidylinositol de-N-acetylase (PIGL) from Bos taurus (Bovine).